We begin with the raw amino-acid sequence, 455 residues long: Peroxisomal membrane protein PEX3 (455 aa).

The span at 113–125 (TVLSDDFSTSQEG) shows a compositional bias: polar residues. A disordered region spans residues 113–135 (TVLSDDFSTSQEGAISEDTNKPP). The chain crosses the membrane as a helical span at residues 155–171 (FLTLIYCESLLIVFLHL).

This sequence belongs to the peroxin-3 family. In terms of assembly, component of the peroxisomal docking complex, composed of at least PEX3, PEX13, PEX14 and PEX17. Component of the peroxisomal translocation complex, composed of at least PEX3, PEX2, PEX10 and PEX12. Interacts with PEX19. Interacts with the pexophagy receptor ATG30.

It is found in the peroxisome membrane. Functionally, peroxisomal membrane protein required for peroxisome biosynthesis. Shared component of both the peroxisomal docking complex and the peroxisomal translocation complex. The two types of peroxisomal matrix targeting signals, PTS1 and PTS2, are first recognized in the cytosol by their receptors PEX5 and PEX7, respectively, which then carry the cargo to the peroxisomal membrane. The peroxisomal targeting signal (PTS) receptor-cargo complexes interact with peroxisomal membrane protein (PMP) components of the docking complex. They have then additional downstream interactions with the translocation complex, leading to the transport of fully folded and oligomerized cargo into the peroxisome matrix. PEX3 acts as an anchoring site for PEX19 on the peroxisomal membrane and thus plays a crucial role in the assembly of the peroxisomal translocation complex. Is also essential for the interaction between the two complexes. Finally. PEX3 activates selective autophagy of peroxisomes (pexophagy) via interaction with the pexophagy receptor ATG30. The protein is Peroxisomal membrane protein PEX3 of Komagataella pastoris (Yeast).